Reading from the N-terminus, the 214-residue chain is Epoxide hydrolase EphH (214 aa).

Catalysis depends on Ser28, which acts as the Nucleophile. Catalysis depends on charge relay system residues Asp156 and His186.

This sequence belongs to the AB hydrolase superfamily.

The catalysed reaction is an epoxide + H2O = an ethanediol. Its activity is regulated as follows. Inhibited by AUDA, a known epoxide hydrolase inhibitor. In terms of biological role, catalyzes the hydrolysis of epoxide-containing substrates. In vitro, catalyzes the hydrolysis of the synthetic compounds PHOME and styrene oxide. Plays an essential role in subverting phagosomal acidification. Plays a major role in the survival of M.tuberculosis (Mtb) during in vitro acidic stress and protects Mtb in response to phagosomal acidification inside macrophages. Also supports Mtb growth under the nutrient-deprived condition at pH 7.0. The sequence is that of Epoxide hydrolase EphH from Mycobacterium tuberculosis (strain ATCC 25618 / H37Rv).